We begin with the raw amino-acid sequence, 63 residues long: Cecropin-A1 (63 aa).

The first 23 residues, 1–23, serve as a signal peptide directing secretion; it reads MKFYNIFVFVALILAITIGQSEA. Arginine amide is present on R62.

It belongs to the cecropin family.

The protein localises to the secreted. Its function is as follows. Cecropins have lytic and antibacterial activity against several Gram-positive and Gram-negative bacteria. The polypeptide is Cecropin-A1 (CecA1) (Drosophila mauritiana (Fruit fly)).